The chain runs to 163 residues: Shikimate kinase (163 aa).

Position 10-15 (10-15 (GVGKTT)) interacts with ATP. Position 14 (Thr-14) interacts with Mg(2+). 3 residues coordinate substrate: Asp-28, Arg-52, and Gly-75. Residue Arg-116 participates in ATP binding. Arg-134 is a binding site for substrate.

The protein belongs to the shikimate kinase family. Monomer. The cofactor is Mg(2+).

The protein localises to the cytoplasm. The enzyme catalyses shikimate + ATP = 3-phosphoshikimate + ADP + H(+). It participates in metabolic intermediate biosynthesis; chorismate biosynthesis; chorismate from D-erythrose 4-phosphate and phosphoenolpyruvate: step 5/7. Its function is as follows. Catalyzes the specific phosphorylation of the 3-hydroxyl group of shikimic acid using ATP as a cosubstrate. In Streptococcus suis (strain 98HAH33), this protein is Shikimate kinase.